Reading from the N-terminus, the 196-residue chain is APGW-amide-related neuropeptide (196 aa).

The signal sequence occupies residues Met-1–Ser-22. A propeptide spanning residues Ser-23 to Asp-48 is cleaved from the precursor. Trp-54 carries the post-translational modification Tryptophan amide. A propeptide spanning residues Ser-58–Asp-68 is cleaved from the precursor. Residue Trp-74 is modified to Tryptophan amide. Positions Ser-78–Glu-88 are excised as a propeptide. Trp-94 carries the post-translational modification Tryptophan amide. Residues Ser-98–Glu-105 constitute a propeptide that is removed on maturation. Trp-111 is modified (tryptophan amide). Residues Ser-115–Val-129 constitute a propeptide that is removed on maturation. Trp-135 is modified (tryptophan amide). Positions Ser-139 to Ile-146 are excised as a propeptide. Tryptophan amide is present on residues Trp-151 and Trp-158. A propeptide spanning residues Ser-162–Ile-196 is cleaved from the precursor.

Expressed in cerebral, pedal and visceral ganglia. TPGW-amide is found in pedal and cerebral ganglia and in shell adductor muscle (at protein level). RPGW-amide and KPGW-amide are found in pedal retractor muscle, ABRM and shell adductor muscle (at protein level).

Its function is as follows. RPGW-amide, KPGW-amide and TPGW-amide tetrapeptides are involved in control of muscle contraction and may function as neurotransmitters. These peptides increase tension of the pedal retractor muscle and, in conjunction with FMRF-amide, increase peak tension of the anterior byssus retractor muscle (ABRM). The sequence is that of APGW-amide-related neuropeptide from Mytilus edulis (Blue mussel).